Reading from the N-terminus, the 232-residue chain is MFQFCLLILLLAPGRFFSALGKPQETLTVENREGSDSKAIPTCREASFCAFLQKNPIDSNLDVLPTCTCTGGTTCSHSWDPNDGKSITEGNKQFKFCSNVPDTIKHECSAEEKALTGIFEEDKVTKKHLAYYGFLHCICPEHSDYPENSYDGTETVEGDKKITTEYYHCERLKTCKSDDTCHALAIGETKKIYYKDCNCPEGQTCPFELKSAYKTEYKETTDKFTTYSMRCQ.

The signal sequence occupies residues 1 to 21 (MFQFCLLILLLAPGRFFSALG). A propeptide spanning residues 22 to 32 (KPQETLTVENR) is cleaved from the precursor.

Post-translationally, contains 8 disulfide bonds. In terms of tissue distribution, expressed by the venom gland.

Its subcellular location is the secreted. In Scolopendra dehaani (Thai centipede), this protein is U-scoloptoxin(11)-Ssd2a.